The sequence spans 187 residues: Putative manganese efflux pump MntP (187 aa).

6 helical membrane-spanning segments follow: residues 3 to 23 (FYSLIFLSCALGMDAFAVSLC), 35 to 55 (HYLIVGIYFGGFQALMPTIGY), 56 to 76 (FIGITFASFIASIDHWIAFIL), 107 to 127 (LALAIATSIDALAVGVSFAFL), 129 to 149 (VNLLLAIFLIGIITFILCIIA), and 166 to 186 (LLGGLVLIILGVKILIEHLFF).

This sequence belongs to the MntP (TC 9.B.29) family.

The protein localises to the cell inner membrane. In terms of biological role, probably functions as a manganese efflux pump. This chain is Putative manganese efflux pump MntP, found in Campylobacter jejuni subsp. doylei (strain ATCC BAA-1458 / RM4099 / 269.97).